Here is an 87-residue protein sequence, read N- to C-terminus: Small ribosomal subunit protein bS20 (87 aa).

This sequence belongs to the bacterial ribosomal protein bS20 family.

Functionally, binds directly to 16S ribosomal RNA. The chain is Small ribosomal subunit protein bS20 from Rhizorhabdus wittichii (strain DSM 6014 / CCUG 31198 / JCM 15750 / NBRC 105917 / EY 4224 / RW1) (Sphingomonas wittichii).